The following is a 538-amino-acid chain: Chaperonin GroEL (538 aa).

Residues 29-32 (TLGP), 86-90 (DGTTT), glycine 413, 477-479 (NAA), and aspartate 493 each bind ATP.

The protein belongs to the chaperonin (HSP60) family. In terms of assembly, forms a cylinder of 14 subunits composed of two heptameric rings stacked back-to-back. Interacts with the co-chaperonin GroES.

The protein localises to the cytoplasm. It catalyses the reaction ATP + H2O + a folded polypeptide = ADP + phosphate + an unfolded polypeptide.. Together with its co-chaperonin GroES, plays an essential role in assisting protein folding. The GroEL-GroES system forms a nano-cage that allows encapsulation of the non-native substrate proteins and provides a physical environment optimized to promote and accelerate protein folding. The polypeptide is Chaperonin GroEL (Bifidobacterium adolescentis (strain ATCC 15703 / DSM 20083 / NCTC 11814 / E194a)).